The chain runs to 279 residues: MTSENMAILFEVLQYMKEFREKTFVVKVGGAALEKEEAKTSFAKSIVFLRHVQVNPIIVHGGGVEITRLMNQLGIKPLFKNGYRVTDEKTLQIAEMVLEKINKDIVLKINLHGGRAIGVSGKDDNLLLCEKDIANGDIGYVGKIRKVNSGFIEKLIAQNYIPVICPVGFGEDGTTYNINADVAAAEIAISLKAEKLIFVSDVPGVMKDGELIPYLDVRNARKLIEEGVVKGGMIPKIQCAVNALKAGIKSVHVVNGEIPHALLTEIFTLHGIGTMLREI.

Substrate contacts are provided by residues 62–63, R84, and N177; that span reads GG.

The protein belongs to the acetylglutamate kinase family. ArgB subfamily.

It is found in the cytoplasm. The enzyme catalyses N-acetyl-L-glutamate + ATP = N-acetyl-L-glutamyl 5-phosphate + ADP. Its pathway is amino-acid biosynthesis; L-arginine biosynthesis; N(2)-acetyl-L-ornithine from L-glutamate: step 2/4. Its function is as follows. Catalyzes the ATP-dependent phosphorylation of N-acetyl-L-glutamate. The sequence is that of Acetylglutamate kinase from Pseudothermotoga lettingae (strain ATCC BAA-301 / DSM 14385 / NBRC 107922 / TMO) (Thermotoga lettingae).